A 216-amino-acid chain; its full sequence is Probable transaldolase (216 aa).

The active-site Schiff-base intermediate with substrate is Lys-83.

Belongs to the transaldolase family. Type 3B subfamily.

It localises to the cytoplasm. It carries out the reaction D-sedoheptulose 7-phosphate + D-glyceraldehyde 3-phosphate = D-erythrose 4-phosphate + beta-D-fructose 6-phosphate. It functions in the pathway carbohydrate degradation; pentose phosphate pathway; D-glyceraldehyde 3-phosphate and beta-D-fructose 6-phosphate from D-ribose 5-phosphate and D-xylulose 5-phosphate (non-oxidative stage): step 2/3. Its function is as follows. Transaldolase is important for the balance of metabolites in the pentose-phosphate pathway. This Shouchella clausii (strain KSM-K16) (Alkalihalobacillus clausii) protein is Probable transaldolase.